The primary structure comprises 303 residues: Probable cell division protein WhiA (303 aa).

A DNA-binding region (H-T-H motif) is located at residues 272 to 303 (SIQQIADSIEPPLTKSGVNHRLRKINKIADDL).

The protein belongs to the WhiA family.

Functionally, involved in cell division and chromosome segregation. This is Probable cell division protein WhiA from Streptococcus thermophilus (strain ATCC BAA-250 / LMG 18311).